Reading from the N-terminus, the 1025-residue chain is AP-2 complex subunit alpha (1025 aa).

A disordered region spans residues 713–737 (RSIMVPMPPPSRRNTIDDVNSKISS). Position 727 is a phosphothreonine (Thr727). Position 733 is a phosphoserine (Ser733).

It belongs to the adaptor complexes large subunit family. Adaptor protein complex 2 (AP-2) is a heterotetramer composed of two large adaptins (alpha-type subunit APL3 and beta-type subunit APL1), a medium chain (mu-type subunit APM4) and a small adaptin (sigma-type subunit APS2).

Its subcellular location is the cell membrane. It is found in the membrane. The protein localises to the coated pit. Functionally, adaptins are components of the adaptor complexes which link clathrin to receptors in coated vesicles. Clathrin-associated protein complexes are believed to interact with the cytoplasmic tails of membrane proteins, leading to their selection and concentration. Alpha adaptin is a subunit of the plasma membrane adaptor. Facilitates interaction between APL1 and APS2. This chain is AP-2 complex subunit alpha (APL3), found in Saccharomyces cerevisiae (strain ATCC 204508 / S288c) (Baker's yeast).